The primary structure comprises 516 residues: Histone H4 transcription factor (516 aa).

C2H2-type zinc fingers lie at residues 15 to 39 (LQCE…VTQH), 127 to 151 (FLCL…VEAH), and 167 to 191 (VLCG…LRSH). A C2H2-type 4; degenerate zinc finger spans residues 197–219 (VACPTCGGMFANNTKFLDHIRRQ). C2H2-type zinc fingers lie at residues 227 to 249 (FQCS…MRNH), 253 to 276 (YKCP…RFRH), 282 to 304 (FKCD…LDTH), 310 to 335 (YSCD…RKVH), and 343 to 366 (YRCH…RKKH). Residues 371–516 (PSGHPRFRYK…AAEEPEVQMV (146 aa)) form an interaction with NPAT region. The interval 372–405 (SGHPRFRYKEHEDGYMRLQLVRYESVELTQQLLR) is required for activation of histone H4 transcription and contributes to DNA-binding. Disordered stretches follow at residues 429–456 (TVPG…PASQ) and 486–516 (PGEP…VQMV). Residues 436-445 (PQEEAEEEGG) are compositionally biased toward acidic residues.

As to quaternary structure, binds MBD2 and a histone deacetylase complex. Interacts with NPAT. In terms of processing, ubiquitinated. Ubiquitination may lead to proteasome-mediated degradation.

The protein resides in the nucleus. Functionally, transcriptional repressor that binds to the consensus sequence 5'-CGGACGTT-3' and to the RB1 promoter. Transcriptional activator that promotes histone H4 gene transcription at the G1/S phase transition in conjunction with NPAT. Also activates transcription of the ATM and PRKDC genes. Autoregulates its expression by associating with its own promoter. This chain is Histone H4 transcription factor (HINFP), found in Bos taurus (Bovine).